The chain runs to 186 residues: Orotate phosphoribosyltransferase (186 aa).

Residues Arg-96, Lys-100, His-102, and 121–129 (DDVATTGTS) contribute to the 5-phospho-alpha-D-ribose 1-diphosphate site. Residues Thr-125 and Arg-153 each coordinate orotate.

Belongs to the purine/pyrimidine phosphoribosyltransferase family. PyrE subfamily. Homodimer. Mg(2+) is required as a cofactor.

The enzyme catalyses orotidine 5'-phosphate + diphosphate = orotate + 5-phospho-alpha-D-ribose 1-diphosphate. It functions in the pathway pyrimidine metabolism; UMP biosynthesis via de novo pathway; UMP from orotate: step 1/2. In terms of biological role, catalyzes the transfer of a ribosyl phosphate group from 5-phosphoribose 1-diphosphate to orotate, leading to the formation of orotidine monophosphate (OMP). The polypeptide is Orotate phosphoribosyltransferase (Aeropyrum pernix (strain ATCC 700893 / DSM 11879 / JCM 9820 / NBRC 100138 / K1)).